The sequence spans 429 residues: Histidine--tRNA ligase (429 aa).

Belongs to the class-II aminoacyl-tRNA synthetase family. As to quaternary structure, homodimer.

It localises to the cytoplasm. The enzyme catalyses tRNA(His) + L-histidine + ATP = L-histidyl-tRNA(His) + AMP + diphosphate + H(+). The sequence is that of Histidine--tRNA ligase from Prochlorococcus marinus subsp. pastoris (strain CCMP1986 / NIES-2087 / MED4).